The following is a 258-amino-acid chain: Cytochrome P450 1A2 (258 aa).

It belongs to the cytochrome P450 family. Heme is required as a cofactor.

It is found in the endoplasmic reticulum membrane. Its subcellular location is the microsome membrane. It catalyses the reaction an organic molecule + reduced [NADPH--hemoprotein reductase] + O2 = an alcohol + oxidized [NADPH--hemoprotein reductase] + H2O + H(+). Functionally, cytochromes P450 are a group of heme-thiolate monooxygenases. In liver microsomes, this enzyme is involved in an NADPH-dependent electron transport pathway. It oxidizes a variety of structurally unrelated compounds, including steroids, fatty acids, and xenobiotics. In Gallus gallus (Chicken), this protein is Cytochrome P450 1A2 (CYP1A2).